The following is a 546-amino-acid chain: Chaperonin GroEL (546 aa).

Residues 30-33 (TLGP), Lys51, 87-91 (DGTTT), Gly415, 479-481 (NAA), and Asp495 contribute to the ATP site.

Belongs to the chaperonin (HSP60) family. Forms a cylinder of 14 subunits composed of two heptameric rings stacked back-to-back. Interacts with the co-chaperonin GroES.

It localises to the cytoplasm. The enzyme catalyses ATP + H2O + a folded polypeptide = ADP + phosphate + an unfolded polypeptide.. Functionally, together with its co-chaperonin GroES, plays an essential role in assisting protein folding. The GroEL-GroES system forms a nano-cage that allows encapsulation of the non-native substrate proteins and provides a physical environment optimized to promote and accelerate protein folding. This chain is Chaperonin GroEL, found in Xanthomonas axonopodis pv. citri (strain 306).